The chain runs to 445 residues: GTPase Der (445 aa).

EngA-type G domains follow at residues 3-166 (PVIA…AERV) and 180-353 (IRIG…ESCY). GTP is bound by residues 9 to 16 (GRPNVGKS), 56 to 60 (DTGGI), 118 to 121 (NKTD), 186 to 193 (GRPNVGKS), 233 to 237 (DTAGI), and 298 to 301 (NKWD). Residues 354 to 438 (AKWTTNRLTR…PIIFEFKSAE (85 aa)) form the KH-like domain.

This sequence belongs to the TRAFAC class TrmE-Era-EngA-EngB-Septin-like GTPase superfamily. EngA (Der) GTPase family. Associates with the 50S ribosomal subunit.

GTPase that plays an essential role in the late steps of ribosome biogenesis. This is GTPase Der from Marinomonas sp. (strain MWYL1).